The following is a 448-amino-acid chain: Bifunctional protein GlmU (448 aa).

A pyrophosphorylase region spans residues 1–232; that stretch reads MSERSLLVVV…VDEVAGVNSR (232 aa). UDP-N-acetyl-alpha-D-glucosamine is bound by residues 11–14, Lys-25, Gln-78, and 83–84; these read LAAG and GT. Mg(2+) is bound at residue Asp-108. UDP-N-acetyl-alpha-D-glucosamine contacts are provided by Gly-144, Glu-158, Asn-173, and Asn-230. Asn-230 provides a ligand contact to Mg(2+). The segment at 233–253 is linker; sequence LQLAEAEAILQGRLRRAAMAG. The interval 254–448 is N-acetyltransferase; the sequence is GATLVAPETV…LRAARGKPKV (195 aa). The UDP-N-acetyl-alpha-D-glucosamine site is built by Arg-319 and Lys-337. The Proton acceptor role is filled by His-349. Residues Tyr-352 and Asn-363 each coordinate UDP-N-acetyl-alpha-D-glucosamine. Acetyl-CoA-binding positions include Ala-366, 372–373, Ser-409, and Arg-426; that span reads NY.

The protein in the N-terminal section; belongs to the N-acetylglucosamine-1-phosphate uridyltransferase family. In the C-terminal section; belongs to the transferase hexapeptide repeat family. Homotrimer. Mg(2+) is required as a cofactor.

The protein localises to the cytoplasm. The enzyme catalyses alpha-D-glucosamine 1-phosphate + acetyl-CoA = N-acetyl-alpha-D-glucosamine 1-phosphate + CoA + H(+). It carries out the reaction N-acetyl-alpha-D-glucosamine 1-phosphate + UTP + H(+) = UDP-N-acetyl-alpha-D-glucosamine + diphosphate. The protein operates within nucleotide-sugar biosynthesis; UDP-N-acetyl-alpha-D-glucosamine biosynthesis; N-acetyl-alpha-D-glucosamine 1-phosphate from alpha-D-glucosamine 6-phosphate (route II): step 2/2. Its pathway is nucleotide-sugar biosynthesis; UDP-N-acetyl-alpha-D-glucosamine biosynthesis; UDP-N-acetyl-alpha-D-glucosamine from N-acetyl-alpha-D-glucosamine 1-phosphate: step 1/1. It functions in the pathway bacterial outer membrane biogenesis; LPS lipid A biosynthesis. Catalyzes the last two sequential reactions in the de novo biosynthetic pathway for UDP-N-acetylglucosamine (UDP-GlcNAc). The C-terminal domain catalyzes the transfer of acetyl group from acetyl coenzyme A to glucosamine-1-phosphate (GlcN-1-P) to produce N-acetylglucosamine-1-phosphate (GlcNAc-1-P), which is converted into UDP-GlcNAc by the transfer of uridine 5-monophosphate (from uridine 5-triphosphate), a reaction catalyzed by the N-terminal domain. The protein is Bifunctional protein GlmU of Azorhizobium caulinodans (strain ATCC 43989 / DSM 5975 / JCM 20966 / LMG 6465 / NBRC 14845 / NCIMB 13405 / ORS 571).